We begin with the raw amino-acid sequence, 306 residues long: Lipid A biosynthesis palmitoleoyltransferase (306 aa).

The helical transmembrane segment at 20–40 (WFGLGVLWLWVQLPYPVLCFL) threads the bilayer. Residues 132 to 137 (HFMSLE) carry the HXXXXD motif motif.

It belongs to the LpxL/LpxM/LpxP family. LpxP subfamily.

The protein resides in the cell inner membrane. The catalysed reaction is (9Z)-hexadecenoyl-[ACP] + alpha-Kdo-(2-&gt;4)-alpha-Kdo-(2-&gt;6)-lipid IVA (E. coli) = (9Z)-hexadecenoyl-(Kdo)2-lipid IVA (E. coli) + holo-[ACP]. Its pathway is bacterial outer membrane biogenesis; lipopolysaccharide biosynthesis. Catalyzes the transfer of palmitoleate from palmitoleoyl-[acyl-carrier-protein] (ACP) to Kdo(2)-lipid IV(A) to form Kdo(2)-(palmitoleoyl)-lipid IV(A). Required for the biosynthesis of a distinct molecular species of lipid A, which is present only in cells grown at low temperatures. It may confer a selective advantage to cells growing at lower temperatures by making the outer membrane a more effective barrier to harmful chemicals. In Escherichia coli (strain K12), this protein is Lipid A biosynthesis palmitoleoyltransferase.